A 157-amino-acid chain; its full sequence is Urease accessory protein UreE (157 aa).

Belongs to the UreE family.

Its subcellular location is the cytoplasm. Functionally, involved in urease metallocenter assembly. Binds nickel. Probably functions as a nickel donor during metallocenter assembly. The chain is Urease accessory protein UreE from Corynebacterium glutamicum (strain ATCC 13032 / DSM 20300 / JCM 1318 / BCRC 11384 / CCUG 27702 / LMG 3730 / NBRC 12168 / NCIMB 10025 / NRRL B-2784 / 534).